The following is a 620-amino-acid chain: Cilia- and flagella-associated protein 52 (620 aa).

WD repeat units follow at residues 62–106 (GHGN…LLAR), 109–150 (LHKG…AICG), 156–195 (LNVG…RKIW), 288–327 (QLQG…ETLI), 330–369 (CHFD…ELLR), 372–411 (VPNM…LMYV), 415–454 (AHRI…QKLE), 459–498 (EHKS…RNQM), 500–539 (LANT…VIRE), 543–582 (SLSG…VTHV), and 585–620 (GHSG…PYTS).

This sequence belongs to the CFAP52 family. As to quaternary structure, microtubule inner protein component of sperm flagellar doublet microtubules. Interacts with BRCA2. Interacts with the CCT chaperonin complex. Interacts with HSP70. Interacts with AK8. Interacts with CFAP45. Interacts with DNAI1. Interacts with IQDC. As to expression, expressed in respiratory cells and sperm (at protein level). Highly expressed in testis. Up-regulated in hepatocellular carcinoma (HCC).

The protein localises to the cytoplasm. It localises to the cytoskeleton. Its subcellular location is the cilium axoneme. It is found in the flagellum axoneme. In terms of biological role, microtubule inner protein (MIP) part of the dynein-decorated doublet microtubules (DMTs) in cilia axoneme. Important for proper ciliary and flagellar beating. May act in cooperation with CFAP45 and axonemal dynein subunit DNAH11. May play a role in cell growth and/or survival. This chain is Cilia- and flagella-associated protein 52, found in Homo sapiens (Human).